The following is an 853-amino-acid chain: DNA mismatch repair protein MutS (853 aa).

614-621 (GPNMGGKS) contributes to the ATP binding site.

The protein belongs to the DNA mismatch repair MutS family.

Its function is as follows. This protein is involved in the repair of mismatches in DNA. It is possible that it carries out the mismatch recognition step. This protein has a weak ATPase activity. The chain is DNA mismatch repair protein MutS from Escherichia coli (strain K12 / MC4100 / BW2952).